Here is an 88-residue protein sequence, read N- to C-terminus: PTS system cellobiose-specific EIIB component (88 aa).

Residues 3–88 (KKRIYLFCSA…IDTLLYGKVD (86 aa)) form the PTS EIIB type-3 domain. The Phosphocysteine intermediate role is filled by Cys-10. Phosphocysteine; by EIIA is present on Cys-10.

The protein localises to the cytoplasm. It carries out the reaction D-cellobiose(out) + N(pros)-phospho-L-histidyl-[protein] = 6-phospho-beta-D-glucosyl-(1-&gt;4)-D-glucose(in) + L-histidyl-[protein]. In terms of biological role, the phosphoenolpyruvate-dependent sugar phosphotransferase system (sugar PTS), a major carbohydrate active transport system, catalyzes the phosphorylation of incoming sugar substrates concomitantly with their translocation across the cell membrane. The enzyme II CelABD PTS system is involved in cellobiose transport. The protein is PTS system cellobiose-specific EIIB component of Aeromonas hydrophila.